Reading from the N-terminus, the 1092-residue chain is Isoleucine--tRNA ligase (1092 aa).

A 'HIGH' region motif is present at residues 53–63; it reads PFANGLPHYGH. Residues 613-617 carry the 'KMSKS' region motif; the sequence is KLSKR. Lysine 616 serves as a coordination point for ATP.

The protein belongs to the class-I aminoacyl-tRNA synthetase family. IleS type 2 subfamily. Monomer. It depends on Zn(2+) as a cofactor.

The protein resides in the cytoplasm. The catalysed reaction is tRNA(Ile) + L-isoleucine + ATP = L-isoleucyl-tRNA(Ile) + AMP + diphosphate. In terms of biological role, catalyzes the attachment of isoleucine to tRNA(Ile). As IleRS can inadvertently accommodate and process structurally similar amino acids such as valine, to avoid such errors it has two additional distinct tRNA(Ile)-dependent editing activities. One activity is designated as 'pretransfer' editing and involves the hydrolysis of activated Val-AMP. The other activity is designated 'posttransfer' editing and involves deacylation of mischarged Val-tRNA(Ile). The protein is Isoleucine--tRNA ligase of Rickettsia peacockii (strain Rustic).